The chain runs to 357 residues: Cobalt-precorrin-5B C(1)-methyltransferase (357 aa).

The protein belongs to the CbiD family.

The catalysed reaction is Co-precorrin-5B + S-adenosyl-L-methionine = Co-precorrin-6A + S-adenosyl-L-homocysteine. It participates in cofactor biosynthesis; adenosylcobalamin biosynthesis; cob(II)yrinate a,c-diamide from sirohydrochlorin (anaerobic route): step 6/10. Catalyzes the methylation of C-1 in cobalt-precorrin-5B to form cobalt-precorrin-6A. The protein is Cobalt-precorrin-5B C(1)-methyltransferase of Paramagnetospirillum magneticum (strain ATCC 700264 / AMB-1) (Magnetospirillum magneticum).